A 455-amino-acid polypeptide reads, in one-letter code: Bifunctional protein GlmU (455 aa).

Residues 1-230 (MTKRNAIILA…FDESMGVNDR (230 aa)) form a pyrophosphorylase region. UDP-N-acetyl-alpha-D-glucosamine contacts are provided by residues 9 to 12 (LAAG), K23, Q73, 78 to 79 (GT), 101 to 103 (SGD), G140, E155, N170, and N228. A Mg(2+)-binding site is contributed by D103. N228 serves as a coordination point for Mg(2+). The linker stretch occupies residues 231-251 (VALARANKVMRNRINTHWMRE). The segment at 252 to 455 (GVSMIDPETT…KENYAKKLPW (204 aa)) is N-acetyltransferase. Residues R333 and K351 each contribute to the UDP-N-acetyl-alpha-D-glucosamine site. Catalysis depends on H363, which acts as the Proton acceptor. 2 residues coordinate UDP-N-acetyl-alpha-D-glucosamine: Y366 and N377. Acetyl-CoA is bound by residues 386–387 (NY), S405, A423, and R440.

This sequence in the N-terminal section; belongs to the N-acetylglucosamine-1-phosphate uridyltransferase family. It in the C-terminal section; belongs to the transferase hexapeptide repeat family. In terms of assembly, homotrimer. The cofactor is Mg(2+).

The protein resides in the cytoplasm. It catalyses the reaction alpha-D-glucosamine 1-phosphate + acetyl-CoA = N-acetyl-alpha-D-glucosamine 1-phosphate + CoA + H(+). The catalysed reaction is N-acetyl-alpha-D-glucosamine 1-phosphate + UTP + H(+) = UDP-N-acetyl-alpha-D-glucosamine + diphosphate. It participates in nucleotide-sugar biosynthesis; UDP-N-acetyl-alpha-D-glucosamine biosynthesis; N-acetyl-alpha-D-glucosamine 1-phosphate from alpha-D-glucosamine 6-phosphate (route II): step 2/2. The protein operates within nucleotide-sugar biosynthesis; UDP-N-acetyl-alpha-D-glucosamine biosynthesis; UDP-N-acetyl-alpha-D-glucosamine from N-acetyl-alpha-D-glucosamine 1-phosphate: step 1/1. Its pathway is bacterial outer membrane biogenesis; LPS lipid A biosynthesis. Its function is as follows. Catalyzes the last two sequential reactions in the de novo biosynthetic pathway for UDP-N-acetylglucosamine (UDP-GlcNAc). The C-terminal domain catalyzes the transfer of acetyl group from acetyl coenzyme A to glucosamine-1-phosphate (GlcN-1-P) to produce N-acetylglucosamine-1-phosphate (GlcNAc-1-P), which is converted into UDP-GlcNAc by the transfer of uridine 5-monophosphate (from uridine 5-triphosphate), a reaction catalyzed by the N-terminal domain. The sequence is that of Bifunctional protein GlmU from Limosilactobacillus reuteri (strain DSM 20016) (Lactobacillus reuteri).